A 416-amino-acid chain; its full sequence is UDP-N-acetylglucosamine 1-carboxyvinyltransferase (416 aa).

Residue 22–23 participates in phosphoenolpyruvate binding; the sequence is KN. Position 91 (R91) interacts with UDP-N-acetyl-alpha-D-glucosamine. C115 acts as the Proton donor in catalysis. 2-(S-cysteinyl)pyruvic acid O-phosphothioketal is present on C115. Residues 120-124, D303, and I325 each bind UDP-N-acetyl-alpha-D-glucosamine; that span reads RPVDL.

This sequence belongs to the EPSP synthase family. MurA subfamily.

The protein resides in the cytoplasm. The catalysed reaction is phosphoenolpyruvate + UDP-N-acetyl-alpha-D-glucosamine = UDP-N-acetyl-3-O-(1-carboxyvinyl)-alpha-D-glucosamine + phosphate. It participates in cell wall biogenesis; peptidoglycan biosynthesis. Cell wall formation. Adds enolpyruvyl to UDP-N-acetylglucosamine. This Oleidesulfovibrio alaskensis (strain ATCC BAA-1058 / DSM 17464 / G20) (Desulfovibrio alaskensis) protein is UDP-N-acetylglucosamine 1-carboxyvinyltransferase.